Here is a 190-residue protein sequence, read N- to C-terminus: Probable RNA-binding protein 18 (190 aa).

Residues 25–106 (HRLWIGNVDP…KKLVVRWAHA (82 aa)) form the RRM domain.

The polypeptide is Probable RNA-binding protein 18 (rbm18) (Xenopus laevis (African clawed frog)).